The primary structure comprises 95 residues: Aspartyl/glutamyl-tRNA(Asn/Gln) amidotransferase subunit C (95 aa).

Belongs to the GatC family. Heterotrimer of A, B and C subunits.

It catalyses the reaction L-glutamyl-tRNA(Gln) + L-glutamine + ATP + H2O = L-glutaminyl-tRNA(Gln) + L-glutamate + ADP + phosphate + H(+). It carries out the reaction L-aspartyl-tRNA(Asn) + L-glutamine + ATP + H2O = L-asparaginyl-tRNA(Asn) + L-glutamate + ADP + phosphate + 2 H(+). In terms of biological role, allows the formation of correctly charged Asn-tRNA(Asn) or Gln-tRNA(Gln) through the transamidation of misacylated Asp-tRNA(Asn) or Glu-tRNA(Gln) in organisms which lack either or both of asparaginyl-tRNA or glutaminyl-tRNA synthetases. The reaction takes place in the presence of glutamine and ATP through an activated phospho-Asp-tRNA(Asn) or phospho-Glu-tRNA(Gln). The protein is Aspartyl/glutamyl-tRNA(Asn/Gln) amidotransferase subunit C of Chlorobium phaeobacteroides (strain BS1).